The chain runs to 193 residues: MSSHLARLEALLFVAGEDGLSLRTMAQLLEIPVTGLTQSLEKLQAKYEADEDTALCLLESSNTYKIVTKPDFACLLRDYSKTPINQSLSRASLEVLSIVAYKQPITRAEVDDIRGVNSSGAIAKLQAFGLIREAGKKDAVGRPNLYATTDYFLDYIGINSLDELVAIDQLELEEQETSLFREDAPEDLEDLDN.

This sequence belongs to the ScpB family. Homodimer. Homodimerization may be required to stabilize the binding of ScpA to the Smc head domains. Component of a cohesin-like complex composed of ScpA, ScpB and the Smc homodimer, in which ScpA and ScpB bind to the head domain of Smc. The presence of the three proteins is required for the association of the complex with DNA.

The protein localises to the cytoplasm. Participates in chromosomal partition during cell division. May act via the formation of a condensin-like complex containing Smc and ScpA that pull DNA away from mid-cell into both cell halves. This chain is Segregation and condensation protein B, found in Streptococcus thermophilus (strain ATCC BAA-250 / LMG 18311).